Reading from the N-terminus, the 340-residue chain is MLVVVARKSSSSARVAAHQTRSHRAAMPAGQPHAHEPDGGGASHRRPQSPPSLPAEVVPAFAPPESEDEESWVWSQIKAEARRDADAEPALASFLYATVLSHPSLPRSISFHLANKLCSSTLLSTLLYDLFLASFTAHPSLRAAVVADLLAARSRDPACVGFSQCLLNFKGFLAIQAHRVSHVLWAQQRRPLALALQSRVADVFAVDIHPAAVVGKGILLDHATGVVIGETAVVGDNVSILHHVTLGGTGKAVGDRHPKIGDGVLIGAGATILGNVKIGAGAKIGAGSVVLIDVPARNTAVGNPARLIGRKNGEVEKDEDMPGESMDHTSFIRQWSDYTI.

Low complexity-rich tracts occupy residues 1-17 (MLVV…RVAA) and 54-64 (PAEVVPAFAPP). The tract at residues 1 to 67 (MLVVVARKSS…VPAFAPPESE (67 aa)) is disordered.

The protein belongs to the transferase hexapeptide repeat family. Homomultimer.

It catalyses the reaction L-serine + acetyl-CoA = O-acetyl-L-serine + CoA. It functions in the pathway amino-acid biosynthesis; L-cysteine biosynthesis; L-cysteine from L-serine: step 1/2. The protein is Probable serine acetyltransferase 5 (SAT5) of Oryza sativa subsp. japonica (Rice).